A 167-amino-acid chain; its full sequence is Centrin-3 (167 aa).

4 EF-hand domains span residues 25–60 (EQKQ…LGFD), 61–96 (VKKA…WILE), 98–133 (DPHE…LGEN), and 134–167 (MSDE…TGDI). Asp-38, Asp-40, Asp-42, and Glu-49 together coordinate Ca(2+). Ser-135 is modified (phosphoserine). Ca(2+) contacts are provided by Asp-147, Asp-149, Asp-151, Glu-153, and Glu-158.

This sequence belongs to the centrin family. Monomer. Component of the TREX-2 complex (transcription and export complex 2), composed of at least ENY2, GANP, PCID2, SEM1, and either centrin CETN2 or CETN3. Interacts with USP49.

Its subcellular location is the cytoplasm. The protein resides in the cytoskeleton. It is found in the microtubule organizing center. The protein localises to the centrosome. It localises to the nucleus. Its subcellular location is the nucleolus. The protein resides in the nucleus envelope. It is found in the nuclear pore complex. The protein localises to the centriole. Functionally, plays a fundamental role in microtubule-organizing center structure and function. Its function is as follows. As a component of the TREX-2 complex, involved in the export of mRNAs to the cytoplasm through the nuclear pores. This chain is Centrin-3 (Cetn3), found in Mus musculus (Mouse).